We begin with the raw amino-acid sequence, 398 residues long: S-adenosylmethionine synthase (398 aa).

136–141 serves as a coordination point for ATP; sequence GTGSSD.

Belongs to the AdoMet synthase 2 family. It depends on Mg(2+) as a cofactor.

The catalysed reaction is L-methionine + ATP + H2O = S-adenosyl-L-methionine + phosphate + diphosphate. It participates in amino-acid biosynthesis; S-adenosyl-L-methionine biosynthesis; S-adenosyl-L-methionine from L-methionine: step 1/1. In terms of biological role, catalyzes the formation of S-adenosylmethionine from methionine and ATP. This chain is S-adenosylmethionine synthase, found in Methanosarcina acetivorans (strain ATCC 35395 / DSM 2834 / JCM 12185 / C2A).